Reading from the N-terminus, the 228-residue chain is Small ribosomal subunit protein uS7A (228 aa).

Belongs to the universal ribosomal protein uS7 family.

This chain is Small ribosomal subunit protein uS7A (RpS5a), found in Drosophila melanogaster (Fruit fly).